Consider the following 508-residue polypeptide: Hydroxymethylglutaryl-CoA synthase, mitochondrial (508 aa).

A mitochondrion-targeting transit peptide spans 1–37 (MQRLLAPARRVLQVKRAMQETSLTPAHLLSAAQQRFS). Residue K52 is modified to N6-succinyllysine. 2 residues coordinate (3S)-3-hydroxy-3-methylglutaryl-CoA: E80 and A81. K83 and K118 each carry N6-acetyllysine; alternate. An N6-succinyllysine; alternate mark is found at K83 and K118. Catalysis depends on E132, which acts as the Proton donor/acceptor. (3S)-3-hydroxy-3-methylglutaryl-CoA-binding residues include C166, N204, and T208. C166 serves as the catalytic Acyl-thioester intermediate. K221 bears the N6-succinyllysine mark. Position 243 is an N6-acetyllysine (K243). K256 is subject to N6-acetyllysine; alternate. K256 is modified (N6-succinyllysine; alternate). Residues S258 and H301 each contribute to the (3S)-3-hydroxy-3-methylglutaryl-CoA site. Catalysis depends on H301, which acts as the Proton donor/acceptor. K306 is subject to N6-acetyllysine. (3S)-3-hydroxy-3-methylglutaryl-CoA is bound at residue K310. 2 positions are modified to N6-acetyllysine; alternate: K310 and K327. N6-succinyllysine; alternate is present on residues K310 and K327. K333 is subject to N6-succinyllysine. Residues K342, K350, K354, and K358 each carry the N6-acetyllysine; alternate modification. Residues K342, K350, K354, and K358 each carry the N6-succinyllysine; alternate modification. (3S)-3-hydroxy-3-methylglutaryl-CoA is bound by residues N380 and S414. At K427 the chain carries N6-acetyllysine. Residue S433 is modified to Phosphoserine. The residue at position 437 (K437) is an N6-acetyllysine. Phosphoserine is present on S440. The residue at position 447 (K447) is an N6-acetyllysine; alternate. N6-succinyllysine; alternate is present on K447. At S456 the chain carries Phosphoserine. K473 carries the N6-acetyllysine; alternate modification. K473 carries the N6-succinyllysine; alternate modification. S477 bears the Phosphoserine mark.

Belongs to the thiolase-like superfamily. HMG-CoA synthase family. Homodimer. In terms of processing, acetylation of Lys-427 is observed in liver mitochondria from fasted mice but not from fed mice. Succinylated. Desuccinylated by SIRT5. Succinylation, at least at Lys-83 and Lys-310, inhibits the enzymatic activity. As to expression, liver and kidney.

The protein resides in the mitochondrion. The enzyme catalyses acetoacetyl-CoA + acetyl-CoA + H2O = (3S)-3-hydroxy-3-methylglutaryl-CoA + CoA + H(+). It functions in the pathway metabolic intermediate biosynthesis; (R)-mevalonate biosynthesis; (R)-mevalonate from acetyl-CoA: step 2/3. In terms of biological role, catalyzes the first irreversible step in ketogenesis, condensing acetyl-CoA to acetoacetyl-CoA to form HMG-CoA, which is converted by HMG-CoA reductase (HMGCR) into mevalonate. This is Hydroxymethylglutaryl-CoA synthase, mitochondrial (Hmgcs2) from Mus musculus (Mouse).